Here is a 206-residue protein sequence, read N- to C-terminus: Imidazoleglycerol-phosphate dehydratase (206 aa).

The disordered stretch occupies residues 1-21; that stretch reads MTTPSTAPTPAPRKAEVSRNT.

The protein belongs to the imidazoleglycerol-phosphate dehydratase family.

It is found in the cytoplasm. It catalyses the reaction D-erythro-1-(imidazol-4-yl)glycerol 3-phosphate = 3-(imidazol-4-yl)-2-oxopropyl phosphate + H2O. It functions in the pathway amino-acid biosynthesis; L-histidine biosynthesis; L-histidine from 5-phospho-alpha-D-ribose 1-diphosphate: step 6/9. This chain is Imidazoleglycerol-phosphate dehydratase, found in Polaromonas sp. (strain JS666 / ATCC BAA-500).